Here is a 103-residue protein sequence, read N- to C-terminus: Muscarinic toxin BM14 (103 aa).

A signal peptide spans 1–21 (MKTLLLTLVVVTIICLDLGYT). 5 disulfide bridges follow: Cys24–Cys45, Cys27–Cys37, Cys38–Cys72, Cys76–Cys90, and Cys91–Cys96.

Belongs to the three-finger toxin family. Ancestral subfamily. Orphan group XVII sub-subfamily. As to expression, expressed by the venom gland.

Its subcellular location is the secreted. In terms of biological role, this toxin inhibits the binding of [3H]quinuclidinyl benzilate to the M2 muscarinic acetylcholine (mAchR) receptor subtype (CHRM2). This chain is Muscarinic toxin BM14, found in Bungarus multicinctus (Many-banded krait).